We begin with the raw amino-acid sequence, 30 residues long: Cysteine-rich venom protein hematin (30 aa).

Belongs to the CRISP family. Contains 8 disulfide bonds. In terms of tissue distribution, expressed by the venom gland.

Its subcellular location is the secreted. Functionally, inhibits calcium-activated potassium channels (KCa), voltage-gated potassium channel (Kv), and the calcium release channel/ryanodine receptor (RyR). This chain is Cysteine-rich venom protein hematin, found in Hemachatus haemachatus (Rinkhals).